Reading from the N-terminus, the 649-residue chain is UvrABC system protein B (649 aa).

In terms of domain architecture, Helicase ATP-binding spans 25 to 178 (EHYKDGIKEQ…EDILKELVKM (154 aa)). ATP is bound at residue 38 to 45 (GVTGSGKT). The Beta-hairpin signature appears at 91-114 (YYDYYQPEAYVAQTDTFIDKESAI). A Helicase C-terminal domain is found at 428–594 (QVDDLLGEIR…SVVRKLKDKK (167 aa)). The UVR domain occupies 614-649 (DEIIKELEKEMKQAAKDLNFEKAAKLRDRIMELKEE).

Belongs to the UvrB family. As to quaternary structure, forms a heterotetramer with UvrA during the search for lesions. Interacts with UvrC in an incision complex.

It localises to the cytoplasm. The UvrABC repair system catalyzes the recognition and processing of DNA lesions. A damage recognition complex composed of 2 UvrA and 2 UvrB subunits scans DNA for abnormalities. Upon binding of the UvrA(2)B(2) complex to a putative damaged site, the DNA wraps around one UvrB monomer. DNA wrap is dependent on ATP binding by UvrB and probably causes local melting of the DNA helix, facilitating insertion of UvrB beta-hairpin between the DNA strands. Then UvrB probes one DNA strand for the presence of a lesion. If a lesion is found the UvrA subunits dissociate and the UvrB-DNA preincision complex is formed. This complex is subsequently bound by UvrC and the second UvrB is released. If no lesion is found, the DNA wraps around the other UvrB subunit that will check the other stand for damage. In Methanosphaera stadtmanae (strain ATCC 43021 / DSM 3091 / JCM 11832 / MCB-3), this protein is UvrABC system protein B.